A 102-amino-acid polypeptide reads, in one-letter code: Protein 108 (102 aa).

Residues 1-30 (MASVKSSSSSSSSSFISLLLLILLVIVLQS) form the signal peptide. 4 cysteine pairs are disulfide-bonded: cysteine 41–cysteine 77, cysteine 51–cysteine 66, cysteine 67–cysteine 92, and cysteine 79–cysteine 99.

The protein belongs to the A9/FIL1 family. In terms of tissue distribution, stamen- and tapetum-specific.

The protein resides in the secreted. The protein is Protein 108 of Solanum lycopersicum (Tomato).